A 180-amino-acid polypeptide reads, in one-letter code: Adenosine 5'-phosphosulfate reductase (180 aa).

Residues Cys-57, Cys-58, Cys-140, and Cys-143 each contribute to the [4Fe-4S] cluster site. Cys-168 functions as the Nucleophile; cysteine thiosulfonate intermediate in the catalytic mechanism.

The protein belongs to the PAPS reductase family. CysH subfamily. It depends on [4Fe-4S] cluster as a cofactor.

It is found in the cytoplasm. It catalyses the reaction [thioredoxin]-disulfide + sulfite + AMP + 2 H(+) = adenosine 5'-phosphosulfate + [thioredoxin]-dithiol. The protein operates within sulfur metabolism; hydrogen sulfide biosynthesis; sulfite from sulfate. Its function is as follows. Catalyzes the formation of sulfite from adenosine 5'-phosphosulfate (APS) using thioredoxin as an electron donor. This is Adenosine 5'-phosphosulfate reductase from Rhizobium tropici.